Reading from the N-terminus, the 311-residue chain is Methionyl-tRNA formyltransferase (311 aa).

109–112 lines the (6S)-5,6,7,8-tetrahydrofolate pocket; it reads SLLP.

The protein belongs to the Fmt family.

It carries out the reaction L-methionyl-tRNA(fMet) + (6R)-10-formyltetrahydrofolate = N-formyl-L-methionyl-tRNA(fMet) + (6S)-5,6,7,8-tetrahydrofolate + H(+). Attaches a formyl group to the free amino group of methionyl-tRNA(fMet). The formyl group appears to play a dual role in the initiator identity of N-formylmethionyl-tRNA by promoting its recognition by IF2 and preventing the misappropriation of this tRNA by the elongation apparatus. The chain is Methionyl-tRNA formyltransferase from Acetivibrio thermocellus (strain ATCC 27405 / DSM 1237 / JCM 9322 / NBRC 103400 / NCIMB 10682 / NRRL B-4536 / VPI 7372) (Clostridium thermocellum).